We begin with the raw amino-acid sequence, 144 residues long: Large ribosomal subunit protein uL13 (144 aa).

Belongs to the universal ribosomal protein uL13 family. As to quaternary structure, part of the 50S ribosomal subunit.

This protein is one of the early assembly proteins of the 50S ribosomal subunit, although it is not seen to bind rRNA by itself. It is important during the early stages of 50S assembly. This is Large ribosomal subunit protein uL13 from Magnetococcus marinus (strain ATCC BAA-1437 / JCM 17883 / MC-1).